The sequence spans 1213 residues: A disintegrin and metalloproteinase with thrombospondin motifs 19 (1213 aa).

Positions 1-27 (MGKNREMRLTHICCCCLLYQLGFLSNG) are cleaved as a signal peptide. Positions 28–322 (IVSELQFAPD…KIAESGRGKR (295 aa)) are excised as a propeptide. Disordered regions lie at residues 49–161 (WRRE…PPPA) and 192–215 (FLAP…AASA). Residues 52–71 (EPVDPAGGSGGSADPGWVRG) show a composition bias toward gly residues. The segment covering 110 to 119 (RPPPPSEGEE) has biased composition (acidic residues). A compositionally biased stretch (low complexity) spans 120 to 139 (DEELESQELPRGSSGAAALS). The segment covering 140–155 (PGAPASWQPPPPPQPP) has biased composition (pro residues). Residue N266 is glycosylated (N-linked (GlcNAc...) asparagine). A Cysteine switch motif is present at residues 298–305 (HYCGIISD). Residue C300 coordinates Zn(2+). Positions 331–551 (YNIETVVVAD…KASNCLLQTN (221 aa)) constitute a Peptidase M12B domain. 11 disulfide bridges follow: C407–C472, C447–C454, C466–C546, C505–C530, C575–C599, C586–C607, C594–C626, C620–C631, C651–C686, C655–C691, and C666–C676. H488 is a Zn(2+) binding site. The active site involves E489. Zn(2+)-binding residues include H492 and H498. The 88-residue stretch at 552-639 (PQSVNSVMVP…ECTSRTSAPE (88 aa)) folds into the Disintegrin domain. One can recognise a TSP type-1 1 domain in the interval 640-692 (HLAGEWSLWSPCSRTCSAGISSRERKCPGLDSEARDCNGPRKQYRICENPPCP). The segment at 797-920 (IIKGDFNHTR…PENQSSKAPE (124 aa)) is spacer. Residues N803, N913, N955, and N1015 are each glycosylated (N-linked (GlcNAc...) asparagine). 4 consecutive TSP type-1 domains span residues 921–981 (PLFM…NEQP), 982–1043 (CQTR…QDCM), 1045–1089 (VWEA…EDCE), and 1093–1150 (KCYV…QPCN). 3 disulfide bridges follow: C994–C1037, C998–C1042, and C1009–C1026. The 40-residue stretch at 1166–1205 (LTFKCLGDQWPVYCRVIREKNLCQDMRWYQRCCETCRDFY) folds into the PLAC domain.

Requires Zn(2+) as cofactor. The precursor is cleaved by a furin endopeptidase. Post-translationally, glycosylated. Can be O-fucosylated by POFUT2 on a serine or a threonine residue found within the consensus sequence C1-X(2)-(S/T)-C2-G of the TSP type-1 repeat domains where C1 and C2 are the first and second cysteine residue of the repeat, respectively. Fucosylated repeats can then be further glycosylated by the addition of a beta-1,3-glucose residue by the glucosyltransferase, B3GALTL. Fucosylation mediates the efficient secretion of ADAMTS family members. Can also be C-glycosylated with one or two mannose molecules on tryptophan residues within the consensus sequence W-X-X-W of the TPRs, and N-glycosylated. These other glycosylations can also facilitate secretion. Expressed in fetal lung, but not in any adult tissues examined. Expression was detected in an osteosarcoma cDNA library.

Its subcellular location is the secreted. It localises to the extracellular space. The protein localises to the extracellular matrix. This is A disintegrin and metalloproteinase with thrombospondin motifs 19 (ADAMTS19) from Homo sapiens (Human).